The following is a 227-amino-acid chain: NADH-quinone oxidoreductase subunit C (227 aa).

It belongs to the complex I 30 kDa subunit family. As to quaternary structure, NDH-1 is composed of 14 different subunits. Subunits NuoB, C, D, E, F, and G constitute the peripheral sector of the complex.

The protein resides in the cell inner membrane. The catalysed reaction is a quinone + NADH + 5 H(+)(in) = a quinol + NAD(+) + 4 H(+)(out). In terms of biological role, NDH-1 shuttles electrons from NADH, via FMN and iron-sulfur (Fe-S) centers, to quinones in the respiratory chain. The immediate electron acceptor for the enzyme in this species is believed to be ubiquinone. Couples the redox reaction to proton translocation (for every two electrons transferred, four hydrogen ions are translocated across the cytoplasmic membrane), and thus conserves the redox energy in a proton gradient. This chain is NADH-quinone oxidoreductase subunit C, found in Coxiella burnetii (strain RSA 331 / Henzerling II).